We begin with the raw amino-acid sequence, 388 residues long: Probable proton-coupled zinc antiporter SLC30A3 (388 aa).

Residues 1–41 (MEPSLATGGSETTRLVSARDRSSAGGGLRLKSLFTEPSEPL) are disordered. Topologically, residues 1–75 (MEPSLATGGS…SPERVQARRQ (75 aa)) are cytoplasmic. Serine 63 and serine 66 each carry phosphoserine. The helical transmembrane segment at 76-96 (LYAACAVCFIFMAGEVVGGYL) threads the bilayer. The Lumenal segment spans residues 97 to 105 (AHSLAIMTD). Residues 106-126 (AAHLLADIGSMLASLFSLWLS) form a helical membrane-spanning segment. Zn(2+) is bound by residues histidine 108 and aspartate 112. At 127–145 (TRPATRTMTFGWHRSETLG) the chain is on the cytoplasmic side. The helical transmembrane segment at 146 to 166 (ALASVVSLWIVTGILLYLAFL) threads the bilayer. Topologically, residues 167-177 (RLLHSDYHIEA) are lumenal. Residues 178–198 (GAMLLTASIAVCANLLMAFVL) form a helical membrane-spanning segment. The Cytoplasmic segment spans residues 199–235 (HQTGAPHSHGSTGAEYAPLEEGHGYPMSLGNTSVRAA). Residues 236 to 256 (FVHVLGDLLQSFGVLAASILI) traverse the membrane as a helical segment. Zn(2+) contacts are provided by histidine 238 and aspartate 242. The Lumenal segment spans residues 257-263 (YFKPQYK). The helical transmembrane segment at 264–284 (VADPISTFLFSICALGSTAPT) threads the bilayer. Residues 285 to 388 (LRDVLLVLME…CLRCQEPSQA (104 aa)) lie on the Cytoplasmic side of the membrane.

The protein belongs to the cation diffusion facilitator (CDF) transporter (TC 2.A.4) family. SLC30A subfamily. In terms of assembly, homodimer. Homodimerization is negligible compared to the human protein. It could explain the lower efficiency of zinc transport. Interacts with TMEM163. In terms of tissue distribution, expression is restricted to brain (at protein level). In the brain, most abundant in hippocampus and cerebral cortex. The mRNA is also detected in testis, expression being restricted to germ cells and highest in pachytene spermatocytes and round spermatids.

The protein localises to the cytoplasmic vesicle. It localises to the secretory vesicle. The protein resides in the synaptic vesicle membrane. Its subcellular location is the synapse. It is found in the synaptosome. The protein localises to the late endosome membrane. It localises to the lysosome membrane. It catalyses the reaction Zn(2+)(in) + 2 H(+)(out) = Zn(2+)(out) + 2 H(+)(in). Probable proton-coupled zinc ion antiporter mediating the import of zinc from cytoplasm into synaptic vesicles and participating to cellular zinc ion homeostasis in the brain. The sequence is that of Probable proton-coupled zinc antiporter SLC30A3 from Mus musculus (Mouse).